Consider the following 324-residue polypeptide: tRNA dimethylallyltransferase (324 aa).

Residue 20 to 27 participates in ATP binding; the sequence is GPTASGKS. 22–27 is a binding site for substrate; that stretch reads TASGKS. Interaction with substrate tRNA stretches follow at residues 45–48, 168–172, and 284–291; these read DSAL, QRLIR, and KRQITWLR.

The protein belongs to the IPP transferase family. In terms of assembly, monomer. Mg(2+) serves as cofactor.

The enzyme catalyses adenosine(37) in tRNA + dimethylallyl diphosphate = N(6)-dimethylallyladenosine(37) in tRNA + diphosphate. Its function is as follows. Catalyzes the transfer of a dimethylallyl group onto the adenine at position 37 in tRNAs that read codons beginning with uridine, leading to the formation of N6-(dimethylallyl)adenosine (i(6)A). This Hydrogenovibrio crunogenus (strain DSM 25203 / XCL-2) (Thiomicrospira crunogena) protein is tRNA dimethylallyltransferase.